The following is a 380-amino-acid chain: Lipid-A-disaccharide synthase (380 aa).

This sequence belongs to the LpxB family.

The catalysed reaction is a lipid X + a UDP-2-N,3-O-bis[(3R)-3-hydroxyacyl]-alpha-D-glucosamine = a lipid A disaccharide + UDP + H(+). The protein operates within bacterial outer membrane biogenesis; LPS lipid A biosynthesis. In terms of biological role, condensation of UDP-2,3-diacylglucosamine and 2,3-diacylglucosamine-1-phosphate to form lipid A disaccharide, a precursor of lipid A, a phosphorylated glycolipid that anchors the lipopolysaccharide to the outer membrane of the cell. The polypeptide is Lipid-A-disaccharide synthase (Azotobacter vinelandii (strain DJ / ATCC BAA-1303)).